A 254-amino-acid chain; its full sequence is Undecaprenyl-diphosphatase 3 (254 aa).

8 consecutive transmembrane segments (helical) span residues 8-28, 33-53, 74-94, 97-117, 133-153, 174-194, 207-227, and 233-253; these read TEFLPVSSTGHMILTGHLIGF, AKVFEVVIQLGSILAVVVIFW, LHIIIGMIPAGVLGVLFHSAI, VLFGPGPVVISLVAGGILMIV, ITYKQAFTIGMFQCLALWPGF, AEYTFILAVPMMVAASGLDLI, LFATGFITAFVVAMLAIVSFL, and VKLTPFAYYRFILAAVFYFFI.

This sequence belongs to the UppP family.

The protein resides in the cell membrane. It catalyses the reaction di-trans,octa-cis-undecaprenyl diphosphate + H2O = di-trans,octa-cis-undecaprenyl phosphate + phosphate + H(+). Its function is as follows. Catalyzes the dephosphorylation of undecaprenyl diphosphate (UPP). Confers resistance to bacitracin. In Bacillus thuringiensis (strain Al Hakam), this protein is Undecaprenyl-diphosphatase 3.